The following is an 83-amino-acid chain: U25-theraphotoxin-Cg1a (83 aa).

A signal peptide spans 1-23; sequence MRFHTLLFLSFLLLVSCALICTA. A propeptide spanning residues 24–48 is cleaved from the precursor; that stretch reads QHPGLKKSGMFHENVGKGQHIEKKR. Intrachain disulfides connect C50/C66, C57/C71, and C65/C81.

Belongs to the neurotoxin 07 (Beta/delta-agtx) family. 03 (aga-4) subfamily. JZTX sub-subfamily. As to expression, expressed by the venom gland.

The protein localises to the secreted. Functionally, inhibits TTX-sensitive sodium currents in rat dorsal root ganglion (DRG) neurons. This Chilobrachys guangxiensis (Chinese earth tiger tarantula) protein is U25-theraphotoxin-Cg1a.